The following is a 449-amino-acid chain: Amidophosphoribosyltransferase (449 aa).

Positions 1–9 (MRGEIMKEK) are excised as a propeptide. Residue cysteine 10 is the Nucleophile of the active site. Residues 10-224 (CGIFGAYSQD…PGEVIVVKDG (215 aa)) form the Glutamine amidotransferase type-2 domain. Cysteine 239 contacts [4Fe-4S] cluster. The Mg(2+) site is built by serine 286, aspartate 346, and aspartate 347. Cysteine 383, cysteine 432, and cysteine 435 together coordinate [4Fe-4S] cluster.

It in the C-terminal section; belongs to the purine/pyrimidine phosphoribosyltransferase family. The cofactor is Mg(2+). [4Fe-4S] cluster serves as cofactor.

It catalyses the reaction 5-phospho-beta-D-ribosylamine + L-glutamate + diphosphate = 5-phospho-alpha-D-ribose 1-diphosphate + L-glutamine + H2O. It participates in purine metabolism; IMP biosynthesis via de novo pathway; N(1)-(5-phospho-D-ribosyl)glycinamide from 5-phospho-alpha-D-ribose 1-diphosphate: step 1/2. Functionally, catalyzes the formation of phosphoribosylamine from phosphoribosylpyrophosphate (PRPP) and glutamine. The polypeptide is Amidophosphoribosyltransferase (Pyrococcus horikoshii (strain ATCC 700860 / DSM 12428 / JCM 9974 / NBRC 100139 / OT-3)).